The primary structure comprises 311 residues: 4-diphosphocytidyl-2-C-methyl-D-erythritol kinase (311 aa).

Lys-9 is a catalytic residue. 95–105 (PLGAGLAGGST) is an ATP binding site. The active site involves Asp-137.

This sequence belongs to the GHMP kinase family. IspE subfamily.

It carries out the reaction 4-CDP-2-C-methyl-D-erythritol + ATP = 4-CDP-2-C-methyl-D-erythritol 2-phosphate + ADP + H(+). Its pathway is isoprenoid biosynthesis; isopentenyl diphosphate biosynthesis via DXP pathway; isopentenyl diphosphate from 1-deoxy-D-xylulose 5-phosphate: step 3/6. Catalyzes the phosphorylation of the position 2 hydroxy group of 4-diphosphocytidyl-2C-methyl-D-erythritol. In Thermosynechococcus vestitus (strain NIES-2133 / IAM M-273 / BP-1), this protein is 4-diphosphocytidyl-2-C-methyl-D-erythritol kinase.